Reading from the N-terminus, the 401-residue chain is Phosphonopyruvate decarboxylase (401 aa).

The segment at 382–401 (WPASAVGSGTRAAAGSAGDR) is disordered. Residues 384–401 (ASAVGSGTRAAAGSAGDR) are compositionally biased toward low complexity.

This sequence belongs to the TPP enzyme family. The cofactor is thiamine diphosphate. It depends on Mg(2+) as a cofactor.

It catalyses the reaction 3-phosphonopyruvate + H(+) = phosphonoacetaldehyde + CO2. The protein operates within secondary metabolite biosynthesis; bialaphos biosynthesis. Its function is as follows. Involved in the biosynthesis of phosphinothricin tripeptide (PTT), also known as bialaphos (BA), a natural-product antibiotic and potent herbicide. Catalyzes the decarboxylation of phosphonopyruvate (PnPy) to generate phosphonoacetaldehyde (PnAA). In Streptomyces hygroscopicus, this protein is Phosphonopyruvate decarboxylase.